A 288-amino-acid polypeptide reads, in one-letter code: Phosphatidylglycerol--prolipoprotein diacylglyceryl transferase (288 aa).

A run of 4 helical transmembrane segments spans residues 18 to 38, 68 to 88, 107 to 127, and 135 to 155; these read WSLR…LACL, FFIY…VIFY, GLSS…FSWI, and LTFL…AFFI. Residue arginine 156 coordinates a 1,2-diacyl-sn-glycero-3-phospho-(1'-sn-glycerol). Helical transmembrane passes span 193 to 213, 222 to 242, and 256 to 276; these read VQLY…FLSY, GYVT…AEYV, and LTIG…LLII.

The protein belongs to the Lgt family.

The protein localises to the cell inner membrane. The enzyme catalyses L-cysteinyl-[prolipoprotein] + a 1,2-diacyl-sn-glycero-3-phospho-(1'-sn-glycerol) = an S-1,2-diacyl-sn-glyceryl-L-cysteinyl-[prolipoprotein] + sn-glycerol 1-phosphate + H(+). The protein operates within protein modification; lipoprotein biosynthesis (diacylglyceryl transfer). Functionally, catalyzes the transfer of the diacylglyceryl group from phosphatidylglycerol to the sulfhydryl group of the N-terminal cysteine of a prolipoprotein, the first step in the formation of mature lipoproteins. This Chlamydia pneumoniae (Chlamydophila pneumoniae) protein is Phosphatidylglycerol--prolipoprotein diacylglyceryl transferase.